Consider the following 599-residue polypeptide: Sulfite reductase [NADPH] flavoprotein alpha-component (599 aa).

The region spanning 64–202 (ITIISASQTG…AASEWRARVV (139 aa)) is the Flavodoxin-like domain. Residues 70 to 75 (SQTGNA), 117 to 120 (STQG), and 153 to 162 (LGDSSYEFFC) each bind FMN. One can recognise an FAD-binding FR-type domain in the interval 234–448 (DSPLVASLSV…IEHNDNFRLP (215 aa)). Residues T322, A356, 386–389 (RLYS), 404–406 (TVG), Y410, and 419–422 (GGAS) each bind FAD. Residues 519–520 (SR), 525–529 (KVYVQ), and D561 contribute to the NADP(+) site. Residue Y599 participates in FAD binding.

It belongs to the NADPH-dependent sulphite reductase flavoprotein subunit CysJ family. The protein in the N-terminal section; belongs to the flavodoxin family. In the C-terminal section; belongs to the flavoprotein pyridine nucleotide cytochrome reductase family. Alpha(8)-beta(8). The alpha component is a flavoprotein, the beta component is a hemoprotein. FAD is required as a cofactor. It depends on FMN as a cofactor.

It carries out the reaction hydrogen sulfide + 3 NADP(+) + 3 H2O = sulfite + 3 NADPH + 4 H(+). It participates in sulfur metabolism; hydrogen sulfide biosynthesis; hydrogen sulfide from sulfite (NADPH route): step 1/1. Functionally, component of the sulfite reductase complex that catalyzes the 6-electron reduction of sulfite to sulfide. This is one of several activities required for the biosynthesis of L-cysteine from sulfate. The flavoprotein component catalyzes the electron flow from NADPH -&gt; FAD -&gt; FMN to the hemoprotein component. The sequence is that of Sulfite reductase [NADPH] flavoprotein alpha-component from Escherichia coli O9:H4 (strain HS).